A 271-amino-acid chain; its full sequence is Calcium-binding protein 4 (271 aa).

The segment at 1-105 (MATEHNVQLV…RSDPQQDAAQ (105 aa)) is disordered. Ser37 is modified (phosphoserine; by PKC/PRKCZ). The segment covering 45–67 (GSQKASSGDQSSSQGSEASGSSK) has biased composition (low complexity). Residues 87–96 (ASHRHSHRHR) show a composition bias toward basic residues. EF-hand domains follow at residues 125–160 (EELE…LGYM), 179–196 (GFVD…KLRE), 202–237 (LGVR…LLGE), and 239–271 (LEGT…LSTG). 5 residues coordinate Ca(2+): Asp138, Asp140, Asp142, Tyr144, and Glu149. Ca(2+) contacts are provided by Asp215, Asp217, Asp219, Arg221, Glu226, Asp252, Asn254, Asp256, Thr258, and Glu263.

Interacts with CACNA1F and CACNA1D (via IQ domain) in a calcium independent manner. Interacts (via N-terminus) with UNC119. In terms of processing, phosphorylated. Phosphorylation levels change with the light conditions and regulate the activity, but has no effect on calcium binding. In terms of tissue distribution, expressed in retina and in the inner hair cells (IHC) of the cochlea.

Its subcellular location is the cytoplasm. It is found in the presynapse. Involved in normal synaptic function through regulation of Ca(2+) influx and neurotransmitter release in photoreceptor synaptic terminals and in auditory transmission. Modulator of CACNA1D and CACNA1F, suppressing the calcium-dependent inactivation and shifting the activation range to more hyperpolarized voltages. This Mus musculus (Mouse) protein is Calcium-binding protein 4 (Cabp4).